A 436-amino-acid polypeptide reads, in one-letter code: Glucose-1-phosphate adenylyltransferase (436 aa).

Alpha-D-glucose 1-phosphate-binding positions include tyrosine 112, glycine 178, 193 to 194 (EK), and serine 211.

It belongs to the bacterial/plant glucose-1-phosphate adenylyltransferase family. In terms of assembly, homotetramer.

The enzyme catalyses alpha-D-glucose 1-phosphate + ATP + H(+) = ADP-alpha-D-glucose + diphosphate. The protein operates within glycan biosynthesis; glycogen biosynthesis. Functionally, involved in the biosynthesis of ADP-glucose, a building block required for the elongation reactions to produce glycogen. Catalyzes the reaction between ATP and alpha-D-glucose 1-phosphate (G1P) to produce pyrophosphate and ADP-Glc. This chain is Glucose-1-phosphate adenylyltransferase, found in Histophilus somni (strain 129Pt) (Haemophilus somnus).